Here is a 110-residue protein sequence, read N- to C-terminus: Disintegrin jerdostatin (110 aa).

An N-terminal signal peptide occupies residues 1-20 (MIQVLLVTICLAVFPYQVSS). The propeptide occupies 21 to 67 (KTLKSGSVNEYEVVNPGTVTGLPKGAVKQPEKKHEPMKGNTLQKLPL). The Disintegrin domain occupies 27 to 110 (SVNEYEVVNP…CECPSYPGNG (84 aa)). 4 disulfide bridges follow: cysteine 68/cysteine 77, cysteine 73/cysteine 96, cysteine 74/cysteine 101, and cysteine 86/cysteine 103. Residues 88 to 90 (RTS) carry the Cell attachment site; atypical (RTS) motif.

Belongs to the disintegrin family. Short disintegrin subfamily. As to quaternary structure, monomer. Two conformers are found, they may differ by their disulfide bond connectivities. Conformer 2 is 33 times less active than conformer 1. Conformer 2 may represent a non-native protein. In terms of processing, the C-terminal dipeptide may be post-translationally removed, as seen in disintegrins that possess a KTS integrin-binding motif. Expressed by the venom gland.

Its subcellular location is the secreted. Its function is as follows. Recombinant protein inhibits the adhesion of alpha-1/beta-1-K562 (ITGA1/ITGB1) cells to collagen IV with an IC(50) of 80 nM. This is Disintegrin jerdostatin from Protobothrops jerdonii (Jerdon's pitviper).